The following is a 453-amino-acid chain: Membrane-bound acylglycerophosphatidylinositol O-acyltransferase mboa-7 (453 aa).

The next 7 membrane-spanning stretches (helical) occupy residues 4 to 24 (ILGL…FSFG), 36 to 56 (ILAS…PKIV), 79 to 99 (LYVF…HYIL), 154 to 174 (AYFY…QMLI), 195 to 215 (VRLL…PLDI), 220 to 240 (AIWE…FVVF), and 244 to 264 (VYSA…GIYP). Residue Asn319 is glycosylated (N-linked (GlcNAc...) asparagine). His350 is a catalytic residue. A run of 2 helical transmembrane segments spans residues 354–374 (AGYF…DVIF) and 421–441 (FWSS…IYSA).

It belongs to the membrane-bound acyltransferase family. As to expression, expressed ubiquitously throughout development from early embryo to larval and adult stages. In adults, strongly expressed in pharyngeal muscle, body wall muscle, vulval cells, distal tip cells, intestinal cells and spermatheca.

It localises to the membrane. It catalyses the reaction 1-octadecanoyl-sn-glycero-3-phospho-(1D-myo-inositol) + (5Z,8Z,11Z,14Z,17Z)-eicosapentaenoyl-CoA = 1-octadecanoyl-2-(5Z,8Z,11Z,14Z,17Z-eicosapentaenoyl)-sn-glycero-3-phospho-(1D-myo-inositol) + CoA. It carries out the reaction a 1-acyl-sn-glycero-3-phospho-(1D-myo-inositol) + (5Z,8Z,11Z,14Z,17Z)-eicosapentaenoyl-CoA = a 1-acyl-2-(5Z,8Z,11Z,14Z,17Z-eicosapentaenoyl)-sn-glycero-3-phospho-(1D-myo-inositol) + CoA. The catalysed reaction is a 1-acyl-sn-glycero-3-phospho-(1D-myo-inositol) + (5Z,8Z,11Z,14Z)-eicosatetraenoyl-CoA = a 1-acyl-2-(5Z,8Z,11Z,14Z-eicosatetraenoyl)-sn-glycero-3-phospho-(1D-myo-inositol) + CoA. Its pathway is lipid metabolism; phospholipid metabolism. Functionally, acyltransferase which mediates the conversion of lysophosphatidylinositol (1-acyl-sn-glycero-3-phosphatidylinositol or LPI) into phosphatidylinositol (1,2-diacyl-sn-glycero-3-phosphoinositol or PI) (LPIAT activity). Prefers sn-2-LPI rather than sn-1-LPI as the acyl acceptor. Lysophospholipid acyltransferases (LPLATs) catalyze the reacylation step of the phospholipid remodeling pathway also known as the Lands cycle. Involved in the selective incorporation of arachidonoyl-CoA ((5Z,8Z,11Z,14Z)-eicosatetraenoyl-CoA) and (5Z,8Z,11Z,14Z,17Z)-eicosapentaenoyl-CoA (EPA-CoA) into PI. Besides its role in biomembranes, PI is a precursor of PI 3-phosphate (PIP3) and its fatty acid composition has an important role in PI3P signaling. The protein is Membrane-bound acylglycerophosphatidylinositol O-acyltransferase mboa-7 of Caenorhabditis elegans.